The following is a 192-amino-acid chain: MSEYLLLLIGTVLVNNFVLVKFLGLCPFMGVSSKLESAIGMSMATTFVLTLASILSYLVNQYLLLPFDLGYLRTMSFILVIAVVVQFTEMLVQKTSASLHRALGIYLPLITTNCAVLGVALLNINEKHGFIESAIFGFGAAVGFSLVLILFSAMRERLAAADVPTPFKGGAIAMVTAGLMSLAFMGFTGLVK.

The next 6 helical transmembrane spans lie at 5-25, 39-59, 65-85, 102-122, 134-154, and 171-191; these read LLLL…FLGL, IGMS…SYLV, LPFD…AVVV, ALGI…VALL, AIFG…FSAM, and AIAM…TGLV.

Belongs to the NqrDE/RnfAE family. The complex is composed of six subunits: RnfA, RnfB, RnfC, RnfD, RnfE and RnfG.

The protein localises to the cell inner membrane. Its function is as follows. Part of a membrane-bound complex that couples electron transfer with translocation of ions across the membrane. This Shewanella pealeana (strain ATCC 700345 / ANG-SQ1) protein is Ion-translocating oxidoreductase complex subunit A.